Reading from the N-terminus, the 53-residue chain is Large ribosomal subunit protein bL32c (53 aa).

The tract at residues 1-21 (MAVPKKRTSKSKKKSRRSHWI) is disordered.

This sequence belongs to the bacterial ribosomal protein bL32 family.

It localises to the plastid. It is found in the chloroplast. The chain is Large ribosomal subunit protein bL32c (rpl32) from Cyanidium caldarium (Red alga).